Consider the following 256-residue polypeptide: Acetyl-coenzyme A carboxylase carboxyl transferase subunit alpha (256 aa).

The CoA carboxyltransferase C-terminal domain maps to 1-236; it reads MTDVARILKE…KEHLKTEINQ (236 aa).

The protein belongs to the AccA family. As to quaternary structure, acetyl-CoA carboxylase is a heterohexamer composed of biotin carboxyl carrier protein (AccB), biotin carboxylase (AccC) and two subunits each of ACCase subunit alpha (AccA) and ACCase subunit beta (AccD).

It is found in the cytoplasm. It catalyses the reaction N(6)-carboxybiotinyl-L-lysyl-[protein] + acetyl-CoA = N(6)-biotinyl-L-lysyl-[protein] + malonyl-CoA. Its pathway is lipid metabolism; malonyl-CoA biosynthesis; malonyl-CoA from acetyl-CoA: step 1/1. Its function is as follows. Component of the acetyl coenzyme A carboxylase (ACC) complex. First, biotin carboxylase catalyzes the carboxylation of biotin on its carrier protein (BCCP) and then the CO(2) group is transferred by the carboxyltransferase to acetyl-CoA to form malonyl-CoA. The protein is Acetyl-coenzyme A carboxylase carboxyl transferase subunit alpha of Streptococcus uberis (strain ATCC BAA-854 / 0140J).